The chain runs to 385 residues: MKKIILVAGGTGGHFFPAVALGEELIKRGYIVHFITDLRCKKYINKDMKIIFHILNLKRFSNIFLFLPILSITFLKSIRLIYNIKCCVIIGFGGYPVIAPMFAAIFLRIPIIIHEQNSYLGKVNKFFARFAKKIATSYEDIKNLPEFAKSKIVLTGGIVRKNIRELDSFMYSVSQHSLTKLTQTALTNTFNPLVKGRNDEFANSNIFTIFIFGGSQGAKLFSELIPASIKILMKKQPSLELNIIQQAALDHQVKIKDIYSKLNITYEFAEFFDNIALQYKVANLVISRAGASTIEELTYIGLPAIFIPLPSAADNHQYYNAKLLEDNKAGWCLEQNNISSEKLADKILDLISNRQLLEDASQNLLNRKKEGHVLLSNLIEDTVFL.

UDP-N-acetyl-alpha-D-glucosamine-binding positions include 11 to 13 (TGG), Asn-117, Arg-160, Ser-215, and Gln-317.

The protein belongs to the glycosyltransferase 28 family. MurG subfamily.

The protein localises to the cell inner membrane. The catalysed reaction is di-trans,octa-cis-undecaprenyl diphospho-N-acetyl-alpha-D-muramoyl-L-alanyl-D-glutamyl-meso-2,6-diaminopimeloyl-D-alanyl-D-alanine + UDP-N-acetyl-alpha-D-glucosamine = di-trans,octa-cis-undecaprenyl diphospho-[N-acetyl-alpha-D-glucosaminyl-(1-&gt;4)]-N-acetyl-alpha-D-muramoyl-L-alanyl-D-glutamyl-meso-2,6-diaminopimeloyl-D-alanyl-D-alanine + UDP + H(+). The protein operates within cell wall biogenesis; peptidoglycan biosynthesis. In terms of biological role, cell wall formation. Catalyzes the transfer of a GlcNAc subunit on undecaprenyl-pyrophosphoryl-MurNAc-pentapeptide (lipid intermediate I) to form undecaprenyl-pyrophosphoryl-MurNAc-(pentapeptide)GlcNAc (lipid intermediate II). This chain is UDP-N-acetylglucosamine--N-acetylmuramyl-(pentapeptide) pyrophosphoryl-undecaprenol N-acetylglucosamine transferase, found in Rickettsia prowazekii (strain Madrid E).